A 158-amino-acid polypeptide reads, in one-letter code: Probable flavodoxin 1 (158 aa).

The Flavodoxin-like domain occupies 4 to 144; sequence ALITYASMSG…SCRAFARGFL (141 aa).

This sequence belongs to the flavodoxin family. The cofactor is FMN.

Low-potential electron donor to a number of redox enzymes. The sequence is that of Probable flavodoxin 1 (ykuN) from Bacillus subtilis (strain 168).